The primary structure comprises 512 residues: Sucrose transport protein SUC2 (512 aa).

The Cytoplasmic segment spans residues 1–31 (MVSHPMEKAANGASALETQTGELDQPERLRK). A helical membrane pass occupies residues 32–52 (IISVSSIAAGVQFGWALQLSL). Residues 53-65 (LTPYVQLLGIPHK) lie on the Extracellular side of the membrane. A helical transmembrane segment spans residues 66 to 86 (WASLIWLCGPISGMLVQPIVG). Topologically, residues 87–100 (YHSDRCTSRFGRRR) are cytoplasmic. Residues 101 to 121 (PFIVAGAGLVTVAVFLIGYAA) form a helical membrane-spanning segment. At 122 to 138 (DIGHSMGDQLDKPPKTR) the chain is on the extracellular side. A helical membrane pass occupies residues 139 to 159 (AIAIFALGFWILDVANNTLQG). Residues 160–177 (PCRAFLADLSAGNAKKTR) lie on the Cytoplasmic side of the membrane. The helical transmembrane segment at 178-198 (TANAFFSFFMAVGNVLGYAAG) threads the bilayer. The Extracellular segment spans residues 199-223 (SYRNLYKVVPFTMTESCDLYCANLK). Residues 224–244 (TCFFLSITLLLIVTFVSLCYV) form a helical membrane-spanning segment. Topologically, residues 245-278 (KEKPWTPEPTADGKASNVPFFGEIFGAFKELKRP) are cytoplasmic. The chain crosses the membrane as a helical span at residues 279–299 (MWMLLIVTALNWIAWFPFLLF). Residues 300-332 (DTDWMGREVYGGNSDATATAASKKLYNDGVRAG) lie on the Extracellular side of the membrane. The chain crosses the membrane as a helical span at residues 333 to 353 (ALGLMLNAIVLGFMSLGVEWI). Residues 354-362 (GRKLGGAKR) are Cytoplasmic-facing. A helical membrane pass occupies residues 363–383 (LWGIVNFILAICLAMTVVVTK). Residues 384–407 (QAENHRRDHGGAKTGPPGNVTAGA) are Extracellular-facing. An N-linked (GlcNAc...) asparagine glycan is attached at Asn402. Residues 408 to 428 (LTLFAILGIPQAITFSIPFAL) form a helical membrane-spanning segment. At 429 to 440 (ASIFSTNSGAGQ) the chain is on the cytoplasmic side. Residues 441–461 (GLSLGVLNLAIVVPQMVISVG) form a helical membrane-spanning segment. Topologically, residues 462–473 (GGPFDELFGGGN) are extracellular. A helical membrane pass occupies residues 474–494 (IPAFVLGAIAAAVSGVLALTV). Topologically, residues 495–512 (LPSPPPDAPAFKATMGFH) are cytoplasmic.

This sequence belongs to the glycoside-pentoside-hexuronide (GPH) cation symporter transporter (TC 2.A.2.4) family. In terms of assembly, homodimer. Interacts with SUC3 and SUC4. In terms of tissue distribution, expressed in leaves and, to a lower extent, in roots, flowers and stems. Highly specific to the phloem, exclusively localized in companion cells (at protein level).

The protein resides in the cell membrane. The catalysed reaction is sucrose(out) + H(+)(out) = sucrose(in) + H(+)(in). It functions in the pathway glycan biosynthesis; sucrose metabolism. Its activity is regulated as follows. Inhibited by protonophores (e.g. dinitrophenol and carbonyl cyanide m-chlorophenyl-hydrazone (CCCP)) and SH group inhibitors (e.g. N-ethylmaleimide (NEM) and p-chloromercuriphenyl sulphonic acid (PCMPS)). Its function is as follows. Responsible for the transport of sucrose into the cell, with the concomitant uptake of protons (symport system). Can also transport other glucosides such as maltose, arbutin (hydroquinone-beta-D-glucoside), salicin (2-(hydroxymethyl)phenyl-beta-D-glucoside), alpha-phenylglucoside, beta-phenylglucoside, alpha-paranitrophenylglucoside, beta-paranitrophenylglucoside, and paranitrophenyl-beta-thioglucoside. May also transport biotin. Required for apoplastic phloem sucrose loading in source tissues (e.g. leaves) in order to transport it to sink tissues (e.g. roots, flowers). The chain is Sucrose transport protein SUC2 from Arabidopsis thaliana (Mouse-ear cress).